We begin with the raw amino-acid sequence, 505 residues long: Cysteine--tRNA ligase (505 aa).

Residue C33 participates in Zn(2+) binding. Positions P35–N45 match the 'HIGH' region motif. Residues C229, H268, and E272 each coordinate Zn(2+). The 'KMSKS' region motif lies at K301–S305. K304 is an ATP binding site.

The protein belongs to the class-I aminoacyl-tRNA synthetase family. In terms of assembly, monomer. Zn(2+) serves as cofactor.

The protein localises to the cytoplasm. The catalysed reaction is tRNA(Cys) + L-cysteine + ATP = L-cysteinyl-tRNA(Cys) + AMP + diphosphate. In Brucella anthropi (strain ATCC 49188 / DSM 6882 / CCUG 24695 / JCM 21032 / LMG 3331 / NBRC 15819 / NCTC 12168 / Alc 37) (Ochrobactrum anthropi), this protein is Cysteine--tRNA ligase.